Reading from the N-terminus, the 300-residue chain is GTPase Era (300 aa).

Residues 7 to 175 (YCGFIAIVGR…EKFVRESLKE (169 aa)) form the Era-type G domain. The tract at residues 15 to 22 (GRPNVGKS) is G1. A GTP-binding site is contributed by 15 to 22 (GRPNVGKS). The segment at 41–45 (QTTRH) is G2. Positions 62-65 (DTPG) are G3. Residues 62 to 66 (DTPGL) and 124 to 127 (NKVD) each bind GTP. Residues 124–127 (NKVD) are G4. Positions 154 to 156 (ISA) are G5. In terms of domain architecture, KH type-2 spans 206–283 (MGEELPYSVT…HLELWVKVKA (78 aa)).

Belongs to the TRAFAC class TrmE-Era-EngA-EngB-Septin-like GTPase superfamily. Era GTPase family. As to quaternary structure, monomer.

The protein localises to the cytoplasm. It is found in the cell inner membrane. In terms of biological role, an essential GTPase that binds both GDP and GTP, with rapid nucleotide exchange. Plays a role in 16S rRNA processing and 30S ribosomal subunit biogenesis and possibly also in cell cycle regulation and energy metabolism. In Glaesserella parasuis serovar 5 (strain SH0165) (Haemophilus parasuis), this protein is GTPase Era.